The chain runs to 143 residues: UPF0102 protein Acid345_3985 (143 aa).

This sequence belongs to the UPF0102 family.

The protein is UPF0102 protein Acid345_3985 of Koribacter versatilis (strain Ellin345).